The primary structure comprises 42 residues: Serine/threonine-protein phosphatase 5 (42 aa).

The segment at 38–42 (QLGVM) is required for autoinhibition.

The protein belongs to the PPP phosphatase family. PP-5 (PP-T) subfamily. As to quaternary structure, probably forms a complex composed of chaperones HSP90 and HSP70, co-chaperones STIP1/HOP, CDC37, PPP5C, PTGES3/p23, TSC1 and client protein TSC2. Probably forms a complex composed of chaperones HSP90 and HSP70, co-chaperones CDC37, PPP5C, TSC1 and client protein TSC2, CDK4, AKT, RAF1 and NR3C1; this complex does not contain co-chaperones STIP1/HOP and PTGES3/p23. Part of a complex with HSP90/HSP90AA1 and steroid receptors. Interacts (via TPR repeats) with HSP90AA1 (via TPR repeat-binding motif) or HSPA1A/HSPA1B; the interaction is direct and activates the phosphatase activity. Dissociates from HSPA1A/HSPA1B and HSP90AA1 in response to arachidonic acid. Interacts with CPNE1 (via VWFA domain). Interacts with CDC16, CDC27. Interacts with KLHDC10 (via the 6 Kelch repeats); inhibits the phosphatase activity on MAP3K5. Interacts with ATM and ATR; both interactions are induced by DNA damage and enhance ATM and ATR kinase activity. Interacts with RAD17; reduced by DNA damage. Interacts with nuclear receptors such as NR3C1/GCR and PPARG (activated by agonist); regulates their transactivation activities. Interacts (via TPR repeats) with S100 proteins S100A1, S100A2, S100A6, S100B and S100P; the interactions are calcium-dependent, strongly activate PPP5C phosphatase activity and compete with HSP90AA1 and MAP3K5 interactions. Interacts with SMAD2 and SMAD3 but not with SMAD1; decreases SMAD3 phosphorylation and protein levels. Interacts (via TPR repeats) with CRY1 and CRY2; the interaction with CRY2 down-regulates the phosphatase activity on CSNK1E. Interacts (via TPR repeats) with the active form of RAC1, GNA12 or GNA13; these interactions activate the phosphatase activity and translocate PPP5C to the cell membrane. Interacts with FLCN. The cofactor is Mg(2+). Mn(2+) serves as cofactor. Activated by at least two different proteolytic cleavages producing a 56 kDa and a 50 kDa form.

The protein resides in the nucleus. Its subcellular location is the cytoplasm. It localises to the cell membrane. The enzyme catalyses O-phospho-L-seryl-[protein] + H2O = L-seryl-[protein] + phosphate. It carries out the reaction O-phospho-L-threonyl-[protein] + H2O = L-threonyl-[protein] + phosphate. With respect to regulation, autoinhibited. In the autoinhibited state, the TPR domain interacts with the catalytic region and prevents substrate access to the catalytic pocket. Allosterically activated by various polyunsaturated fatty acids, free long-chain fatty-acids and long-chain fatty acyl-CoA esters, arachidonic acid being the most effective activator. HSP90A and probably RAC1, GNA12 and GNA13 can also release the autoinhibition by the TPR repeat. Activation by RAC1, GNA12 and GNA13 is synergistic with the one produced by fatty acids binding. Inhibited by okadaic acid. Functionally, serine/threonine-protein phosphatase that dephosphorylates a myriad of proteins involved in different signaling pathways including the kinases CSNK1E, ASK1/MAP3K5, PRKDC and RAF1, the nuclear receptors NR3C1, PPARG, ESR1 and ESR2, SMAD proteins and TAU/MAPT. Implicated in wide ranging cellular processes, including apoptosis, differentiation, DNA damage response, cell survival, regulation of ion channels or circadian rhythms, in response to steroid and thyroid hormones, calcium, fatty acids, TGF-beta as well as oxidative and genotoxic stresses. Participates in the control of DNA damage response mechanisms such as checkpoint activation and DNA damage repair through, for instance, the regulation ATM/ATR-signaling and dephosphorylation of PRKDC and TP53BP1. Inhibits ASK1/MAP3K5-mediated apoptosis induced by oxidative stress. Plays a positive role in adipogenesis, mainly through the dephosphorylation and activation of PPARG transactivation function. Also dephosphorylates and inhibits the anti-adipogenic effect of NR3C1. Regulates the circadian rhythms, through the dephosphorylation and activation of CSNK1E. May modulate TGF-beta signaling pathway by the regulation of SMAD3 phosphorylation and protein expression levels. Dephosphorylates and may play a role in the regulation of TAU/MAPT. Through their dephosphorylation, may play a role in the regulation of ions channels such as KCNH2. Dephosphorylate FNIP1, disrupting interaction with HSP90AA1/Hsp90. The polypeptide is Serine/threonine-protein phosphatase 5 (PPP5C) (Oryctolagus cuniculus (Rabbit)).